Reading from the N-terminus, the 112-residue chain is Hydrogenase maturation factor HypA (112 aa).

His2 contacts Ni(2+). Positions 73, 76, 88, and 91 each coordinate Zn(2+).

Belongs to the HypA/HybF family.

In terms of biological role, involved in the maturation of [NiFe] hydrogenases. Required for nickel insertion into the metal center of the hydrogenase. This Synechococcus elongatus (strain ATCC 33912 / PCC 7942 / FACHB-805) (Anacystis nidulans R2) protein is Hydrogenase maturation factor HypA.